A 412-amino-acid chain; its full sequence is MSGKEKILLAYSGGLDTSCILKWLLEKGYEVICFMADVGQEEDFVAAREKALRVGAKDVIIKDMKRIFVEKFVWPAIQMGLVYEDRYLLGTSLARPCISIGLMESAAEHSCSIISHGATGKGNDQIRFELSCYALDPKIKVIAPWRLPEFCERFQGRKDLLDYAQKHGIPVSATPKAPWSMDANIMHISYESGILENPAKAAPEELYQMTQSVMKSSNTPIKVDITFKEGLPVTVLEHSGGKTLETPLEVLTFLNKIGGEQGVGRVDLVENRFLGLKSRGVYETPGATILHVAHKDMEVYCLDREIFRVKSFLALKMADYVYNGFWYSPEAEYVRTCLVGAQKNVSGKVTLEIFKGHVIAIARESTKTIYNQELASMDVHGTLSPYAATGFIEVNAMRLKEHYRVFGSANME.

Residues 10–18 and Ala36 each bind ATP; that span reads AYSGGLDTS. Residues Tyr87 and Ser92 each contribute to the L-citrulline site. 115 to 123 lines the ATP pocket; it reads SHGATGKGN. Residues Thr119, Asn123, and Asp124 each contribute to the L-aspartate site. An L-citrulline-binding site is contributed by Asn123. The L-citrulline site is built by Arg127, Ser180, Ser189, Glu270, and Tyr282.

This sequence belongs to the argininosuccinate synthase family. As to quaternary structure, homotetramer.

It catalyses the reaction L-citrulline + L-aspartate + ATP = 2-(N(omega)-L-arginino)succinate + AMP + diphosphate + H(+). The protein operates within amino-acid biosynthesis; L-arginine biosynthesis; L-arginine from L-ornithine and carbamoyl phosphate: step 2/3. It functions in the pathway nitrogen metabolism; urea cycle; (N(omega)-L-arginino)succinate from L-aspartate and L-citrulline: step 1/1. This Aedes aegypti (Yellowfever mosquito) protein is Argininosuccinate synthase.